Consider the following 153-residue polypeptide: MSIEVNNESAIAADEAKLQRLAGYTFDIMHVHPDAELAILLVDEAAMEQLHVQWMDEPGPTDVLSFPMDELRPGTEDEPSPAGLLGDVVLCPQVAQVQAETTGHTLMDELLLLMTHGILHLLGFDHAEPAEEREMFGIQRDILVGFARYDRQH.

Zn(2+) is bound by residues H116, H120, and H126.

The protein belongs to the endoribonuclease YbeY family. Zn(2+) is required as a cofactor.

It is found in the cytoplasm. In terms of biological role, single strand-specific metallo-endoribonuclease involved in late-stage 70S ribosome quality control and in maturation of the 3' terminus of the 16S rRNA. The protein is Endoribonuclease YbeY of Leifsonia xyli subsp. xyli (strain CTCB07).